The following is a 962-amino-acid chain: Translation initiation factor IF-2 (962 aa).

Residues 52–77 (RSHGQADDSSRKKITLTKRETSEIRQ) show a composition bias toward basic and acidic residues. Disordered stretches follow at residues 52–87 (RSHGQADDSSRKKITLTKRETSEIRQSDGTGKTRTV) and 121–378 (AVEE…EPVV). Residues 78 to 87 (SDGTGKTRTV) show a composition bias toward polar residues. 3 stretches are compositionally biased toward basic and acidic residues: residues 123 to 183 (EEAR…KAEE), 197 to 250 (DSSR…EAEA), and 267 to 278 (PSERKAEEKKAE). Gly residues predominate over residues 342-355 (TSGGVGGWRGGPRG). A tr-type G domain is found at 462–631 (PRPPVVTVMG…LLQAEVLELT (170 aa)). A G1 region spans residues 471–478 (GHVDHGKT). 471–478 (GHVDHGKT) contributes to the GTP binding site. The tract at residues 496-500 (GITQH) is G2. The interval 517–520 (DTPG) is G3. GTP-binding positions include 517–521 (DTPGH) and 571–574 (NKID). Residues 571 to 574 (NKID) are G4. The tract at residues 607–609 (SAK) is G5.

It belongs to the TRAFAC class translation factor GTPase superfamily. Classic translation factor GTPase family. IF-2 subfamily.

The protein resides in the cytoplasm. Its function is as follows. One of the essential components for the initiation of protein synthesis. Protects formylmethionyl-tRNA from spontaneous hydrolysis and promotes its binding to the 30S ribosomal subunits. Also involved in the hydrolysis of GTP during the formation of the 70S ribosomal complex. The protein is Translation initiation factor IF-2 of Cupriavidus necator (strain ATCC 17699 / DSM 428 / KCTC 22496 / NCIMB 10442 / H16 / Stanier 337) (Ralstonia eutropha).